The chain runs to 363 residues: Double-strand-specific pac1 ribonuclease (363 aa).

Disordered stretches follow at residues 1 to 35 (MGRF…KRSS) and 92 to 138 (SRHD…PPLR). Residues 13-22 (DSSSSASDSL) show a composition bias toward low complexity. Residues 24-35 (RGRRSLGHKRSS) show a composition bias toward basic residues. Phosphoserine is present on S122. Positions 139–262 (SEKLKEQVFM…YLGALILDGQ (124 aa)) constitute an RNase III domain. The DRBM domain occupies 285–356 (RPIDKLAKSK…AMQALEVLAK (72 aa)).

Requires Mg(2+) as cofactor.

The enzyme catalyses Endonucleolytic cleavage to 5'-phosphomonoester.. In terms of biological role, digests double-stranded RNA. Converts long double-stranded RNAs into short oligonucleotides, leaving 5'-phosphates on their cleavage products. Probably inhibits mating and meiosis by degrading a specific mRNA required for sexual development. The protein is Double-strand-specific pac1 ribonuclease (pac1) of Schizosaccharomyces pombe (strain 972 / ATCC 24843) (Fission yeast).